Reading from the N-terminus, the 338-residue chain is Glycerol-3-phosphate dehydrogenase [NAD(P)+] (338 aa).

Residues Ser-11, Trp-12, His-32, Arg-33, and Lys-106 each coordinate NADPH. Sn-glycerol 3-phosphate contacts are provided by Lys-106, Gly-137, and Ser-139. Ala-141 lines the NADPH pocket. Positions 192, 245, 255, 256, and 257 each coordinate sn-glycerol 3-phosphate. Lys-192 acts as the Proton acceptor in catalysis. An NADPH-binding site is contributed by Arg-256. The NADPH site is built by Val-280 and Glu-282.

This sequence belongs to the NAD-dependent glycerol-3-phosphate dehydrogenase family.

It localises to the cytoplasm. The catalysed reaction is sn-glycerol 3-phosphate + NAD(+) = dihydroxyacetone phosphate + NADH + H(+). It carries out the reaction sn-glycerol 3-phosphate + NADP(+) = dihydroxyacetone phosphate + NADPH + H(+). Its pathway is membrane lipid metabolism; glycerophospholipid metabolism. In terms of biological role, catalyzes the reduction of the glycolytic intermediate dihydroxyacetone phosphate (DHAP) to sn-glycerol 3-phosphate (G3P), the key precursor for phospholipid synthesis. The polypeptide is Glycerol-3-phosphate dehydrogenase [NAD(P)+] (Lysinibacillus sphaericus (strain C3-41)).